A 191-amino-acid polypeptide reads, in one-letter code: Ferric nitrobindin-like protein (191 aa).

The short motif at 20 to 26 (GDWAGAG) is the GXWXGXG element.

It belongs to the nitrobindin family.

This chain is Ferric nitrobindin-like protein, found in Streptomyces coelicolor (strain ATCC BAA-471 / A3(2) / M145).